Here is a 162-residue protein sequence, read N- to C-terminus: SsrA-binding protein (162 aa).

Belongs to the SmpB family.

The protein localises to the cytoplasm. Functionally, required for rescue of stalled ribosomes mediated by trans-translation. Binds to transfer-messenger RNA (tmRNA), required for stable association of tmRNA with ribosomes. tmRNA and SmpB together mimic tRNA shape, replacing the anticodon stem-loop with SmpB. tmRNA is encoded by the ssrA gene; the 2 termini fold to resemble tRNA(Ala) and it encodes a 'tag peptide', a short internal open reading frame. During trans-translation Ala-aminoacylated tmRNA acts like a tRNA, entering the A-site of stalled ribosomes, displacing the stalled mRNA. The ribosome then switches to translate the ORF on the tmRNA; the nascent peptide is terminated with the 'tag peptide' encoded by the tmRNA and targeted for degradation. The ribosome is freed to recommence translation, which seems to be the essential function of trans-translation. This chain is SsrA-binding protein, found in Colwellia psychrerythraea (strain 34H / ATCC BAA-681) (Vibrio psychroerythus).